We begin with the raw amino-acid sequence, 234 residues long: Uridylate kinase (234 aa).

9-12 lines the ATP pocket; the sequence is KLSG. Position 51 (glycine 51) interacts with UMP. Residues glycine 52 and arginine 56 each coordinate ATP. Residues aspartate 71 and 132–139 contribute to the UMP site; that span reads CGNPFFTT. ATP contacts are provided by threonine 159, tyrosine 165, and aspartate 168.

Belongs to the UMP kinase family. Homohexamer.

The protein resides in the cytoplasm. It carries out the reaction UMP + ATP = UDP + ADP. The protein operates within pyrimidine metabolism; CTP biosynthesis via de novo pathway; UDP from UMP (UMPK route): step 1/1. Its activity is regulated as follows. Inhibited by UTP. In terms of biological role, catalyzes the reversible phosphorylation of UMP to UDP. The protein is Uridylate kinase of Prochlorococcus marinus subsp. pastoris (strain CCMP1986 / NIES-2087 / MED4).